The primary structure comprises 404 residues: Cysteine desulfurase IscS (404 aa).

Pyridoxal 5'-phosphate is bound by residues 75 to 76 (AT), N155, Q183, and 203 to 205 (SGH). At K206 the chain carries N6-(pyridoxal phosphate)lysine. Residue T243 participates in pyridoxal 5'-phosphate binding. C328 functions as the Cysteine persulfide intermediate in the catalytic mechanism. Position 328 (C328) interacts with [2Fe-2S] cluster.

Belongs to the class-V pyridoxal-phosphate-dependent aminotransferase family. NifS/IscS subfamily. In terms of assembly, homodimer. Forms a heterotetramer with IscU, interacts with other sulfur acceptors. The cofactor is pyridoxal 5'-phosphate.

It is found in the cytoplasm. The enzyme catalyses (sulfur carrier)-H + L-cysteine = (sulfur carrier)-SH + L-alanine. The protein operates within cofactor biosynthesis; iron-sulfur cluster biosynthesis. In terms of biological role, master enzyme that delivers sulfur to a number of partners involved in Fe-S cluster assembly, tRNA modification or cofactor biosynthesis. Catalyzes the removal of elemental sulfur atoms from cysteine to produce alanine. Functions as a sulfur delivery protein for Fe-S cluster synthesis onto IscU, an Fe-S scaffold assembly protein, as well as other S acceptor proteins. The polypeptide is Cysteine desulfurase IscS (Serratia proteamaculans (strain 568)).